The chain runs to 140 residues: Nucleoside diphosphate kinase (140 aa).

The ATP site is built by Lys11, Phe59, Arg87, Thr93, Arg104, and Asn114. His117 (pros-phosphohistidine intermediate) is an active-site residue.

Belongs to the NDK family. In terms of assembly, homotetramer. The cofactor is Mg(2+).

It is found in the cytoplasm. The enzyme catalyses a 2'-deoxyribonucleoside 5'-diphosphate + ATP = a 2'-deoxyribonucleoside 5'-triphosphate + ADP. It catalyses the reaction a ribonucleoside 5'-diphosphate + ATP = a ribonucleoside 5'-triphosphate + ADP. Its function is as follows. Major role in the synthesis of nucleoside triphosphates other than ATP. The ATP gamma phosphate is transferred to the NDP beta phosphate via a ping-pong mechanism, using a phosphorylated active-site intermediate. This chain is Nucleoside diphosphate kinase, found in Ruegeria pomeroyi (strain ATCC 700808 / DSM 15171 / DSS-3) (Silicibacter pomeroyi).